The following is a 499-amino-acid chain: MATVIPGDLSEVRDTQKAPSGKRKRGESKPRKNFPCQLCDKAFNSVEKLKVHSFSHTGERPYKCTHQDCTKAFVSKYKLQRHMATHSPEKTHKCNYCEKMFHRKDHLKNHLHTHDPNKETFKCEECGKSYNTKLGFKRHLALHAATSGDLTCKVCLQNFESTGVLLEHLKSHAGKSSGGVKEKKHQCEHCERRFYTRKDVRRHMVVHTGRKDFLCQYCAQRFGRKDHLTRHMKKSHNQELLKVKTEPVDFLDPFTCNMSVPIKDELLPVMSLPSSELLSKPFTNTLQLNLYNTPFQSMQSSGSAHQMITTLPLGMTCPIDMDAVHPSHHLAFKCPFSSTSYAISIPEKEQPLKGEIESYLMELQGGAPSSSQDSPASSSKLGLEPQSGSPDDGAGDLSLSKSSISISDPLSTPALDFSQLFNFIPLNGPPYNPLSVGSLGMSYSQEEAHSSVSQLPTQTQDLQDPANTVGLSSLHSLSAAFTSSLSSSTTLPRFHQAFQ.

Residues 1–33 (MATVIPGDLSEVRDTQKAPSGKRKRGESKPRKN) form a disordered region. Residues 2–84 (ATVIPGDLSE…SKYKLQRHMA (83 aa)) form an interaction with KPNA2 region. A Nuclear localization signal motif is present at residues 22-25 (KRKR). 7 consecutive C2H2-type zinc fingers follow at residues 34–56 (FPCQ…SFSH), 62–86 (YKCT…MATH), 92–114 (HKCN…LHTH), 121–143 (FKCE…LALH), 150–172 (LTCK…LKSH), 185–207 (HQCE…MVVH), and 213–236 (FLCQ…KKSH). The decreased nuclear import with localization in the nucleus but also in the cytoplasm stretch occupies residues 41–242 (KAFNSVEKLK…KKSHNQELLK (202 aa)). The tract at residues 243–383 (VKTEPVDFLD…SPASSSKLGL (141 aa)) is repression domain; contains 3 sumoylation motifs and massively decrease transcription activity. Residues 243-499 (VKTEPVDFLD…TLPRFHQAFQ (257 aa)) form an activates transcription; Inhibition of nuclear import due to lack of NLS and KPNA2 interaction region. Residues K244 and K263 each participate in a glycyl lysine isopeptide (Lys-Gly) (interchain with G-Cter in SUMO) cross-link. The span at 365–379 (GGAPSSSQDSPASSS) shows a compositional bias: low complexity. The disordered stretch occupies residues 365-400 (GGAPSSSQDSPASSSKLGLEPQSGSPDDGAGDLSLS). The massively activates transcription stretch occupies residues 384–499 (EPQSGSPDDG…TLPRFHQAFQ (116 aa)).

This sequence belongs to the krueppel C2H2-type zinc-finger protein family. As to quaternary structure, interacts with KPNA2, which escorts protein to the nucleus via interaction with nuclear localization signal. Interacts with E3 SUMO-protein ligase PIAS1, PIAS2 and PIAS4. Post-translationally, sumoylated with SUMO1; which inhibits transcriptional activity, but does not affect nuclear localization. Blockers of sumoylation pathway such as SENP3 and inactive UBE2I increases transcriptional capacity. Sumoylation is increased in the presence of PIAS1. Acetylated by lysine acetyltransferase EP300; which activates transcriptional capacity. Lysine residues that are sumoylated also seem to be target for acetylation. As to expression, expressed in heart, spleen, lung, kidney, brain, testis and epididymis but not in salivary glands.

The protein localises to the nucleus. Its function is as follows. Transcription factor whose activation results in up-regulation of target genes, such as IGFII, leading to uncontrolled cell proliferation: when overexpressed in cultured cells, higher proliferation rate and transformation are observed. Other target genes such as CRLF1, CRABP2, CRIP2, PIGF are strongly induced in cells with PLAG1 induction. Proto-oncogene whose ectopic expression can trigger the development of pleomorphic adenomas of the salivary gland and lipoblastomas. Cooperates with CBFB-MYH11. This chain is Zinc finger protein PLAG1 (Plag1), found in Mus musculus (Mouse).